Here is a 282-residue protein sequence, read N- to C-terminus: Nucleotide-binding protein Ping_2894 (282 aa).

8-15 lines the ATP pocket; it reads GRSGSGKT. 56–59 serves as a coordination point for GTP; that stretch reads DIRN.

The protein belongs to the RapZ-like family.

In terms of biological role, displays ATPase and GTPase activities. The sequence is that of Nucleotide-binding protein Ping_2894 from Psychromonas ingrahamii (strain DSM 17664 / CCUG 51855 / 37).